A 289-amino-acid polypeptide reads, in one-letter code: 33 kDa chaperonin (289 aa).

2 disulfide bridges follow: cysteine 230–cysteine 232 and cysteine 263–cysteine 266.

It belongs to the HSP33 family. Under oxidizing conditions two disulfide bonds are formed involving the reactive cysteines. Under reducing conditions zinc is bound to the reactive cysteines and the protein is inactive.

The protein resides in the cytoplasm. Functionally, redox regulated molecular chaperone. Protects both thermally unfolding and oxidatively damaged proteins from irreversible aggregation. Plays an important role in the bacterial defense system toward oxidative stress. The chain is 33 kDa chaperonin from Shigella flexneri serotype 5b (strain 8401).